The sequence spans 506 residues: 2-isopropylmalate synthase (506 aa).

A Pyruvate carboxyltransferase domain is found at 4–266 (ILFMDTTLRD…EPSMTLKEIK (263 aa)). The Mn(2+) site is built by Asp13, His201, His203, and Asn237. The regulatory domain stretch occupies residues 390–506 (NITQLQVHFV…KLKSFIQLVK (117 aa)).

Belongs to the alpha-IPM synthase/homocitrate synthase family. LeuA type 1 subfamily. In terms of assembly, homodimer. The cofactor is Mn(2+).

The protein resides in the cytoplasm. It carries out the reaction 3-methyl-2-oxobutanoate + acetyl-CoA + H2O = (2S)-2-isopropylmalate + CoA + H(+). Its pathway is amino-acid biosynthesis; L-leucine biosynthesis; L-leucine from 3-methyl-2-oxobutanoate: step 1/4. Its function is as follows. Catalyzes the condensation of the acetyl group of acetyl-CoA with 3-methyl-2-oxobutanoate (2-ketoisovalerate) to form 3-carboxy-3-hydroxy-4-methylpentanoate (2-isopropylmalate). The sequence is that of 2-isopropylmalate synthase from Bacillus cereus (strain ZK / E33L).